Here is a 221-residue protein sequence, read N- to C-terminus: Protein Pisl_1005 (221 aa).

The AMMECR1 domain occupies Glu8–Glu201.

This Pyrobaculum islandicum (strain DSM 4184 / JCM 9189 / GEO3) protein is Protein Pisl_1005.